A 1104-amino-acid polypeptide reads, in one-letter code: Receptor-mediated endocytosis protein 6 (1104 aa).

The Ras-GAP domain maps to Leu156 to Asn389. The tract at residues Ser663–Pro682 is disordered. The region spanning Gln966–Leu1104 is the VPS9 domain.

It belongs to the GAPVD1 family. As to quaternary structure, interacts with GDP-bound rab-5. Interacts with alpha-adaptin.

The protein localises to the membrane. The protein resides in the cytoplasmic vesicle. Its subcellular location is the clathrin-coated vesicle. Its function is as follows. Acts both as a GTPase-activating protein (GAP) and a guanine nucleotide exchange factor (GEF), and participates in endocytosis. Acts by regulating the activation of rab-5 by exchanging bound GDP for free GTP at clathrin coated pits. The polypeptide is Receptor-mediated endocytosis protein 6 (rme-6) (Caenorhabditis briggsae).